The primary structure comprises 143 residues: MLAWNNLVEMLGCSKASNEFIYLPQKLNELPVFEEGVLGDRSYYSFFNSGVLFLLEDDLVNQISLYIQADEGFSAYTGELPLPVNSRESEIIQVLGTPSGSGGGKMDMLLGYVNRWIKYKTESHTLHIQFDQNDQLCRVTLMQ.

In terms of assembly, interacts with cognate CdiA-CT but not non-cognate CdiA-CT from E.coli strain 536 / UPEC.

Its function is as follows. Immunity protein component of a toxin-immunity protein module, which functions as a cellular contact-dependent growth inhibition (CDI) system. CDI modules allow bacteria to communicate with and inhibit the growth of closely related neighboring bacteria in a contact-dependent fashion. Protects cells against the DNase activity of CdiA, its cognate toxin protein, but not against non-cognate CdiA from E.coli strain 536 / UPEC. In Dickeya dadantii (strain 3937) (Erwinia chrysanthemi (strain 3937)), this protein is Immunity protein CdiI (cdiI).